Consider the following 928-residue polypeptide: Sodium/calcium exchanger 3 (928 aa).

The signal sequence occupies residues 1-30; that stretch reads MAWLRLQPLTSAFLHFGLVTFVLFLNCLRA. Residues 31–73 lie on the Extracellular side of the membrane; the sequence is EAGDSGDVPSAGQNNESCSGSSDCKEGVILPIWYPENPSLGDK. Asn-45 is a glycosylation site (N-linked (GlcNAc...) asparagine). A helical transmembrane segment spans residues 74–94; the sequence is IARVIVYFVALIYMFLGVSII. Topologically, residues 95–147 are cytoplasmic; the sequence is ADRFMASIEVITSQEREVTIKKPNGETSTTTIRVWNETVSNLTLMALGSSAPE. Residues 148-168 traverse the membrane as a helical segment; the sequence is ILLSLIEVCGHGFIAGDLGPS. Thr-169 is a topological domain (extracellular). The chain crosses the membrane as a helical span at residues 170–190; that stretch reads IVGSAAFNMFIIIGICVYVIP. The Cytoplasmic segment spans residues 191-201; sequence DGETRKIKHLR. Residues 202 to 222 form a helical membrane-spanning segment; the sequence is VFFVTAAWSIFAYIWLYMILA. Residues 223 to 230 are Extracellular-facing; it reads VFSPGVVQ. The chain crosses the membrane as a helical span at residues 231 to 251; that stretch reads VWEGLLTLFFFPVCVLLAWVA. Residues 252-727 are Cytoplasmic-facing; the sequence is DKRLLFYKYM…DESGEERLPS (476 aa). Residues 253–272 are putative calmodulin-binding region; it reads KRLLFYKYMHKKYRTDKHRG. 2 consecutive Calx-beta domains span residues 390 to 485 and 519 to 618; these read EPED…VRLS and ATVT…VIEM. Ca(2+) contacts are provided by Glu-409, Asp-445, Asp-470, Asp-471, Ile-473, Glu-475, Glu-478, Asp-525, Asp-526, Asp-527, Glu-543, Asp-579, Asp-605, and Glu-673. The helical transmembrane segment at 728-748 threads the bilayer; that stretch reads CFDYVMHFLTVFWKVLFACVP. Residues 749 to 755 lie on the Extracellular side of the membrane; sequence PTEYCHG. The chain crosses the membrane as a helical span at residues 756–776; sequence WACFVVSILIIGMLTAIIGDL. Over 777–779 the chain is Cytoplasmic; that stretch reads ASH. Residues 780–800 traverse the membrane as a helical segment; it reads FGCTIGLKDSVTAVVFVAFGT. Residues 801–829 lie on the Extracellular side of the membrane; the sequence is SVPDTFASKAAALQDVYADASIGNVTGSN. N-linked (GlcNAc...) asparagine glycosylation occurs at Asn-824. The helical transmembrane segment at 830–850 threads the bilayer; the sequence is AVNVFLGIGLAWSVAAIYWAM. At 851–861 the chain is on the cytoplasmic side; that stretch reads QGQEFHVSAGT. Residues 862-882 traverse the membrane as a helical segment; the sequence is LAFSVTLFTIFAFVCLSVLLY. The Extracellular portion of the chain corresponds to 883-904; the sequence is RRRPHLGGELGGPRGCKLATTW. The chain crosses the membrane as a helical span at residues 905–925; the sequence is LFVSLWLLYILFATLEAYCYI. Residues 926-928 lie on the Cytoplasmic side of the membrane; it reads KGF.

It belongs to the Ca(2+):cation antiporter (CaCA) (TC 2.A.19) family. SLC8 subfamily. In terms of assembly, interacts with AKAP1. In terms of tissue distribution, detected in gray and white matter in the spinal cord. Detected in hippocampus neurons. Detected in brain cortex neurons. Detected in skeletal muscle (at protein level). Isoform 1 and isoform 2 are highly expressed in brain; levels are higher for isoform 2. Isoform 1 and isoform 2 are detected in soleus muscle; levels are higher for isoform 1. Detected in gastrocnemius muscle.

It is found in the cell membrane. The protein localises to the perikaryon. Its subcellular location is the cell projection. It localises to the dendrite. The protein resides in the dendritic spine. It is found in the sarcolemma. The protein localises to the cytoplasm. Its subcellular location is the sarcoplasm. It localises to the cell junction. The protein resides in the mitochondrion outer membrane. It is found in the perinuclear region. The protein localises to the endoplasmic reticulum membrane. The catalysed reaction is Ca(2+)(in) + 3 Na(+)(out) = Ca(2+)(out) + 3 Na(+)(in). Its activity is regulated as follows. Calcium transport is stimulated by cytoplasmic Ca(2+) and is inhibited by Na(+). Isoform 1 is more sensitive to stimulation by Ca(2+) than isoform 2. Isoform 2 is more sensitive to inactivation by Na(+). Mediates the electrogenic exchange of Ca(2+) against Na(+) ions across the cell membrane, and thereby contributes to the regulation of cytoplasmic Ca(2+) levels and Ca(2+)-dependent cellular processes. Contributes to cellular Ca(2+) homeostasis in excitable cells, both in muscle and in brain. In a first phase, voltage-gated channels mediate the rapid increase of cytoplasmic Ca(2+) levels due to release of Ca(2+) stores from the endoplasmic reticulum. SLC8A3 mediates the export of Ca(2+) from the cell during the next phase, so that cytoplasmic Ca(2+) levels rapidly return to baseline. Contributes to Ca(2+) transport during excitation-contraction coupling in muscle. In neurons, contributes to the rapid decrease of cytoplasmic Ca(2+) levels back to baseline after neuronal activation, and thereby contributes to modulate synaptic plasticity, learning and memory. Required for normal oligodendrocyte differentiation and for normal myelination. Mediates Ca(2+) efflux from mitochondria and contributes to mitochondrial Ca(2+) ion homeostasis. Isoform 1 displays higher calcium exchanger activity than isoform 2, probably because isoform 1 has a lower threshold for activation by cytoplasmic Ca(2+). This Mus musculus (Mouse) protein is Sodium/calcium exchanger 3.